A 221-amino-acid polypeptide reads, in one-letter code: Probable serine protease inhibitor 6 (221 aa).

The first 22 residues, 1–22 (MKCLFLLCLCLFPIVVFSSTFT), serve as a signal peptide directing secretion. Positions 23 to 28 (SQNPIN) are excised as a propeptide. A Vacuolar targeting signal motif is present at residues 25–30 (NPINLP). Disulfide bonds link Cys76-Cys125 and Cys174-Cys191.

Belongs to the protease inhibitor I3 (leguminous Kunitz-type inhibitor) family.

Its subcellular location is the vacuole. Its function is as follows. Inhibitor of trypsin (serine protease). May protect the plant by inhibiting proteases of invading organisms. This is Probable serine protease inhibitor 6 from Solanum tuberosum (Potato).